We begin with the raw amino-acid sequence, 119 residues long: Large ribosomal subunit protein bL20 (119 aa).

Belongs to the bacterial ribosomal protein bL20 family.

Binds directly to 23S ribosomal RNA and is necessary for the in vitro assembly process of the 50S ribosomal subunit. It is not involved in the protein synthesizing functions of that subunit. In Streptococcus pyogenes serotype M1, this protein is Large ribosomal subunit protein bL20.